A 577-amino-acid polypeptide reads, in one-letter code: Arginine--tRNA ligase (577 aa).

The short motif at 122–132 (PNVAKEMHVGH) is the 'HIGH' region element.

It belongs to the class-I aminoacyl-tRNA synthetase family. As to quaternary structure, monomer.

The protein localises to the cytoplasm. The enzyme catalyses tRNA(Arg) + L-arginine + ATP = L-arginyl-tRNA(Arg) + AMP + diphosphate. This is Arginine--tRNA ligase from Escherichia coli O6:K15:H31 (strain 536 / UPEC).